A 485-amino-acid chain; its full sequence is Ribulose bisphosphate carboxylase large chain 2 (485 aa).

Positions 125 and 175 each coordinate substrate. The active-site Proton acceptor is the lysine 177. Lysine 179 lines the substrate pocket. Residues lysine 203, aspartate 205, and glutamate 206 each coordinate Mg(2+). Position 203 is an N6-carboxylysine (lysine 203). Histidine 295 acts as the Proton acceptor in catalysis. The substrate site is built by arginine 296, histidine 328, and serine 380.

It belongs to the RuBisCO large chain family. Type I subfamily. As to quaternary structure, heterohexadecamer of 8 large chains and 8 small chains. The cofactor is Mg(2+).

The catalysed reaction is 2 (2R)-3-phosphoglycerate + 2 H(+) = D-ribulose 1,5-bisphosphate + CO2 + H2O. It catalyses the reaction D-ribulose 1,5-bisphosphate + O2 = 2-phosphoglycolate + (2R)-3-phosphoglycerate + 2 H(+). Functionally, ruBisCO catalyzes two reactions: the carboxylation of D-ribulose 1,5-bisphosphate, the primary event in carbon dioxide fixation, as well as the oxidative fragmentation of the pentose substrate. Both reactions occur simultaneously and in competition at the same active site. The polypeptide is Ribulose bisphosphate carboxylase large chain 2 (Methylibium petroleiphilum (strain ATCC BAA-1232 / LMG 22953 / PM1)).